Consider the following 260-residue polypeptide: Small ribosomal subunit protein uS2 (260 aa).

Residues 224 to 260 (GRQGQDAGEDSAEKTFADTADGEGDFEESSNNENQEA) form a disordered region. The span at 243-260 (ADGEGDFEESSNNENQEA) shows a compositional bias: acidic residues.

The protein belongs to the universal ribosomal protein uS2 family.

The chain is Small ribosomal subunit protein uS2 from Oenococcus oeni (strain ATCC BAA-331 / PSU-1).